The sequence spans 642 residues: G protein-coupled receptor kinase 1 (642 aa).

The segment at 1–202 (MEIENIVANT…LEKRPVDKHT (202 aa)) is N-terminal. The RGS domain maps to 52-188 (YAFVVEKQPI…AESMYFHRFL (137 aa)). Positions 203-470 (FRLYRVLGKG…AEEIRAHPFF (268 aa)) constitute a Protein kinase domain. ATP contacts are provided by residues 209 to 217 (LGKGGFGEV) and lysine 232. Aspartate 328 (proton acceptor) is an active-site residue. The 66-residue stretch at 480–545 (EPVPWKKMEA…GCVSIPWQSE (66 aa)) folds into the AGC-kinase C-terminal domain. A disordered region spans residues 612 to 642 (VEQQQPPKTSTQTPAVRSSRAASASGRTLVI). The span at 614 to 636 (QQQPPKTSTQTPAVRSSRAASAS) shows a compositional bias: low complexity.

It belongs to the protein kinase superfamily. AGC Ser/Thr protein kinase family. GPRK subfamily.

The enzyme catalyses [G-protein-coupled receptor] + ATP = [G-protein-coupled receptor]-phosphate + ADP + H(+). Specifically phosphorylates the activated forms of G protein-coupled receptors. In Caenorhabditis elegans, this protein is G protein-coupled receptor kinase 1 (grk-1).